The primary structure comprises 223 residues: Small ribosomal subunit protein uS3 (223 aa).

The region spanning 39–107 (VREFLHKKLA…PVQINIEEVR (69 aa)) is the KH type-2 domain.

This sequence belongs to the universal ribosomal protein uS3 family. Part of the 30S ribosomal subunit. Forms a tight complex with proteins S10 and S14.

In terms of biological role, binds the lower part of the 30S subunit head. Binds mRNA in the 70S ribosome, positioning it for translation. The polypeptide is Small ribosomal subunit protein uS3 (Francisella tularensis subsp. holarctica (strain FTNF002-00 / FTA)).